Here is a 479-residue protein sequence, read N- to C-terminus: Replication factor C large subunit (479 aa).

43 to 50 (GPPGVGKT) provides a ligand contact to ATP. The interval 441-479 (EEKEESVEEVAEEKPEEEREEPRARKKAGKNLTLDSFFS) is disordered. Over residues 452–463 (EEKPEEEREEPR) the composition is skewed to basic and acidic residues.

The protein belongs to the activator 1 small subunits family. RfcL subfamily. In terms of assembly, heteropentamer composed of four small subunits (RfcS) and one large subunit (RfcL). Both subunits interact with PCNA.

Part of the RFC clamp loader complex which loads the PCNA sliding clamp onto DNA. The complex possesses DNA-dependent ATPase activity which is further stimulated by PCNA. This is Replication factor C large subunit (rfcL) from Archaeoglobus fulgidus (strain ATCC 49558 / DSM 4304 / JCM 9628 / NBRC 100126 / VC-16).